The following is a 349-amino-acid chain: Thioredoxin reductase, mitochondrial (349 aa).

Residues 1–30 (MLLVRNSTLGRLSSLRGFFRNINESNIFYR) constitute a mitochondrion transit peptide. FAD contacts are provided by residues 41 to 44 (SGPA), 70 to 71 (IA), Q75, N84, V117, C175, D318, and 325 to 327 (RQA). An intrachain disulfide couples C172 to C175.

This sequence belongs to the class-II pyridine nucleotide-disulfide oxidoreductase family. In terms of assembly, homodimer. The cofactor is FAD.

The protein localises to the mitochondrion. The catalysed reaction is [thioredoxin]-dithiol + NADP(+) = [thioredoxin]-disulfide + NADPH + H(+). This is Thioredoxin reductase, mitochondrial (TRR1) from Kluyveromyces lactis (strain ATCC 8585 / CBS 2359 / DSM 70799 / NBRC 1267 / NRRL Y-1140 / WM37) (Yeast).